We begin with the raw amino-acid sequence, 231 residues long: MLPSISLLLAAALGTSAHYTFPKVWANSGTTADWQYVRRADNWQNNGFVDNVNSQQIRCFQSTHSPAQSTLSVAAGTTITYGAAPSVYHPGPMQFYLARVPDGQDINSWTGEGAVWFKIYHEQPTFGSQLTWSSNGKSSFPVKIPSCIKSGSYLLRAEHIGLHVAQSSGAAQFYISCAQLSITGGGSTEPGANYKVSFPGAYKASDPGILININYPVPTSYKNPGPSVFTC.

A signal peptide spans 1 to 17 (MLPSISLLLAAALGTSA). Positions 18, 50, and 89 each coordinate Cu(2+). Residue aspartate 50 coordinates O2. Disulfide bonds link cysteine 59/cysteine 177 and cysteine 147/cysteine 231. Residues histidine 163 and glutamine 172 each contribute to the O2 site. A Cu(2+)-binding site is contributed by tyrosine 174.

It belongs to the polysaccharide monooxygenase AA9 family. It depends on Cu(2+) as a cofactor.

Its subcellular location is the secreted. It catalyses the reaction [(1-&gt;4)-beta-D-glucosyl]n+m + reduced acceptor + O2 = 4-dehydro-beta-D-glucosyl-[(1-&gt;4)-beta-D-glucosyl]n-1 + [(1-&gt;4)-beta-D-glucosyl]m + acceptor + H2O.. Lytic polysaccharide monooxygenase (LPMO) that depolymerizes crystalline and amorphous polysaccharides via the oxidation of scissile alpha- or beta-(1-4)-glycosidic bonds, yielding C1 oxidation products. Catalysis by LPMOs requires the reduction of the active-site copper from Cu(II) to Cu(I) by a reducing agent and H(2)O(2) or O(2) as a cosubstrate. The chain is AA9 family lytic polysaccharide monooxygenase F (gh61-6) from Neurospora crassa (strain ATCC 24698 / 74-OR23-1A / CBS 708.71 / DSM 1257 / FGSC 987).